A 212-amino-acid polypeptide reads, in one-letter code: Imidazole glycerol phosphate synthase subunit HisH (212 aa).

Positions 3-212 (DIAIVDYGMG…LGNFVRWKPV (210 aa)) constitute a Glutamine amidotransferase type-1 domain. Residue Cys82 is the Nucleophile of the active site. Catalysis depends on residues His191 and Glu193.

As to quaternary structure, heterodimer of HisH and HisF.

It localises to the cytoplasm. The catalysed reaction is 5-[(5-phospho-1-deoxy-D-ribulos-1-ylimino)methylamino]-1-(5-phospho-beta-D-ribosyl)imidazole-4-carboxamide + L-glutamine = D-erythro-1-(imidazol-4-yl)glycerol 3-phosphate + 5-amino-1-(5-phospho-beta-D-ribosyl)imidazole-4-carboxamide + L-glutamate + H(+). The enzyme catalyses L-glutamine + H2O = L-glutamate + NH4(+). The protein operates within amino-acid biosynthesis; L-histidine biosynthesis; L-histidine from 5-phospho-alpha-D-ribose 1-diphosphate: step 5/9. Functionally, IGPS catalyzes the conversion of PRFAR and glutamine to IGP, AICAR and glutamate. The HisH subunit catalyzes the hydrolysis of glutamine to glutamate and ammonia as part of the synthesis of IGP and AICAR. The resulting ammonia molecule is channeled to the active site of HisF. This Nitrosospira multiformis (strain ATCC 25196 / NCIMB 11849 / C 71) protein is Imidazole glycerol phosphate synthase subunit HisH.